The sequence spans 1210 residues: Histone-lysine N-methyltransferase EHMT2 (1210 aa).

Positions 1-23 (MAAAAGAAAAAAAEGEAPAEMGA) are enriched in low complexity. Disordered stretches follow at residues 1-262 (MAAA…LEEW) and 280-386 (DERV…EYME). At Ala-2 the chain carries N-acetylalanine. The segment covering 26–38 (LEKETRGATERVH) has biased composition (basic and acidic residues). A Phosphoserine modification is found at Ser-40. Thr-44 is subject to Phosphothreonine. Ser-47 is subject to Phosphoserine. A compositionally biased stretch (low complexity) spans 105 to 128 (GRILLGHATKSFPSSPSKGGSCPS). Ser-140 carries the post-translational modification Phosphoserine. The segment covering 155–165 (PGAQGAAAAGS) has biased composition (low complexity). Ser-173 is subject to Phosphoserine. Lys-185 is modified (N6,N6,N6-trimethyllysine; by EHMT2; alternate). Position 185 is an N6,N6-dimethyllysine; by EHMT2; alternate (Lys-185). Residues 198–216 (PEKRPPEIQHFRMSDDVHS) show a composition bias toward basic and acidic residues. Glycyl lysine isopeptide (Lys-Gly) (interchain with G-Cter in SUMO2) cross-links involve residues Lys-219 and Lys-229. Residues Ser-232, Ser-242, and Ser-246 each carry the phosphoserine modification. A compositionally biased stretch (basic and acidic residues) spans 280 to 291 (DERVDSDSKSEV). Positions 298 to 327 (LSEEEEEEEEEEEEEEEEEEEEEEEEDEES) are enriched in acidic residues. The segment covering 338–347 (GRRKAKKKWR) has biased composition (basic residues). Residues Ser-350, Ser-412, and Ser-413 each carry the phosphoserine modification. Positions 548 to 608 (IPRGDGVTPP…LADTIDSSGP (61 aa)) are disordered. Thr-555 is modified (phosphothreonine). Ser-569 carries the phosphoserine modification. Residue Lys-634 forms a Glycyl lysine isopeptide (Lys-Gly) (interchain with G-Cter in SUMO2) linkage. 7 ANK repeats span residues 649-678 (FHPRQLYLSVKQGELQKVILMLLDNLDPNF), 684-713 (SKRTPLHAAAQKGSVEICHVLLQAGANINA), 717-746 (QQRTPLMEAVVNNHLEVARYMVQRGGCVYS), 750-780 (DGSTCLHHAAKIGNLEMVSLLLSTGQVDVNA), 784-813 (GGWTPIIWAAEHKHIEVIRMLLTRGADVTL), 817-846 (EENICLHWASFTGSAAIAEVLLNARCDLHA), and 850-879 (HGDTPLHIAARESYHDCVLLFLSRGANPEL). The interval 817-819 (EEN) is histone H3K9me binding. Positions 972 to 1035 (QHCTCVDDCS…NCKNRVVQSG (64 aa)) constitute a Pre-SET domain. 9 residues coordinate Zn(2+): Cys-974, Cys-976, Cys-980, Cys-985, Cys-987, Cys-1017, Cys-1021, Cys-1023, and Cys-1027. Residues 1038–1155 (VRLQLYRTAK…TGEELGFDYG (118 aa)) enclose the SET domain. Residues 1048-1050 (MGW), Tyr-1085, and 1112-1113 (NH) contribute to the S-adenosyl-L-methionine site. Residues 1074 to 1093 (DAEADVREDDSYLFDLDNKD) are interaction with histone H3. Cys-1115 serves as a coordination point for Zn(2+). Residues 1154-1157 (YGDR) are interaction with histone H3. The Post-SET domain occupies 1164–1180 (KYFTCQCGSEKCKHSAE). Position 1168 (Cys-1168) interacts with Zn(2+). An S-adenosyl-L-methionine-binding site is contributed by Gln-1169. Residues Cys-1170 and Cys-1175 each coordinate Zn(2+). The residue at position 1204 (Ser-1204) is a Phosphoserine. At Thr-1210 the chain carries Phosphothreonine.

This sequence belongs to the class V-like SAM-binding methyltransferase superfamily. Histone-lysine methyltransferase family. Suvar3-9 subfamily. Heterodimer; heterodimerizes with EHMT1/GLP. Interacts with GFI1B and WIZ. Part of the E2F6.com-1 complex in G0 phase composed of E2F6, MGA, MAX, TFDP1, CBX3, BAT8, EHMT1, RING1, RNF2, MBLR, L3MBTL2 and YAF2. Part of a complex composed of TRIM28, HDAC1, HDAC2 and EHMT2. Interacts with UHRF1. Interacts with CDYL. Interacts with REST only in the presence of CDYL. Part of a complex containing at least CDYL, REST, WIZ, SETB1, EHMT1 and EHMT2. Interacts with PRDM9 and CDYL; interaction only takes place when PRDM9 is bound to hotspot DNA. Interacts with SMYD5. Post-translationally, methylated at Lys-185; automethylated. In terms of tissue distribution, expressed in all tissues examined, with high levels in fetal liver, thymus, lymph node, spleen and peripheral blood leukocytes and lower level in bone marrow.

Its subcellular location is the nucleus. It localises to the chromosome. The enzyme catalyses N(6)-methyl-L-lysyl(9)-[histone H3] + S-adenosyl-L-methionine = N(6),N(6)-dimethyl-L-lysyl(9)-[histone H3] + S-adenosyl-L-homocysteine + H(+). The catalysed reaction is L-lysyl(9)-[histone H3] + S-adenosyl-L-methionine = N(6)-methyl-L-lysyl(9)-[histone H3] + S-adenosyl-L-homocysteine + H(+). In terms of biological role, histone methyltransferase that specifically mono- and dimethylates 'Lys-9' of histone H3 (H3K9me1 and H3K9me2, respectively) in euchromatin. H3K9me represents a specific tag for epigenetic transcriptional repression by recruiting HP1 proteins to methylated histones. Also mediates monomethylation of 'Lys-56' of histone H3 (H3K56me1) in G1 phase, leading to promote interaction between histone H3 and PCNA and regulating DNA replication. Also weakly methylates 'Lys-27' of histone H3 (H3K27me). Also required for DNA methylation, the histone methyltransferase activity is not required for DNA methylation, suggesting that these 2 activities function independently. Probably targeted to histone H3 by different DNA-binding proteins like E2F6, MGA, MAX and/or DP1. May also methylate histone H1. In addition to the histone methyltransferase activity, also methylates non-histone proteins: mediates dimethylation of 'Lys-373' of p53/TP53. Also methylates CDYL, WIZ, ACIN1, DNMT1, HDAC1, ERCC6, KLF12 and itself. The polypeptide is Histone-lysine N-methyltransferase EHMT2 (EHMT2) (Homo sapiens (Human)).